The primary structure comprises 386 residues: Phosphoglycerate kinase (386 aa).

Substrate contacts are provided by residues 21-23 (DLN), Arg-36, 59-62 (HLGR), Arg-112, and Arg-145. Residues Lys-196, Glu-313, and 339–342 (GGDT) each bind ATP.

This sequence belongs to the phosphoglycerate kinase family. In terms of assembly, monomer.

Its subcellular location is the cytoplasm. It carries out the reaction (2R)-3-phosphoglycerate + ATP = (2R)-3-phospho-glyceroyl phosphate + ADP. It functions in the pathway carbohydrate degradation; glycolysis; pyruvate from D-glyceraldehyde 3-phosphate: step 2/5. This Haemophilus influenzae (strain PittGG) protein is Phosphoglycerate kinase.